Reading from the N-terminus, the 227-residue chain is Inner membrane lipoprotein SadB (227 aa).

An N-terminal signal peptide occupies residues 1-21 (MHKNGKFIPLLALGFTFFLSG). Cys-22 is lipidated: N-palmitoyl cysteine. Cys-22 is lipidated: S-diacylglycerol cysteine. Residues 31–68 (VEEMKEQQKEQETKINLLEKQQKEQEAKINLLEKQQAT) are a coiled coil.

Homotrimer.

Its subcellular location is the cell inner membrane. Functionally, required for proper surface expression of the autotransporter adhesin SadA. Could be directly involved in the biogenesis of functionally active SadA. The sequence is that of Inner membrane lipoprotein SadB from Salmonella typhimurium (strain LT2 / SGSC1412 / ATCC 700720).